Here is a 151-residue protein sequence, read N- to C-terminus: HTH-type transcriptional regulator FL11 (151 aa).

The HTH asnC-type domain maps to 5–66 (LDEIDKKIIK…IIDPEALGYS (62 aa)). A DNA-binding region (H-T-H motif) is located at residues 24 to 43 (LREISKITGLAESTIHERIR). 98–104 (ETTGDYD) provides a ligand contact to L-arginine. Residues N118, D122, and 133–135 (THT) each bind L-lysine. L-arginine is bound by residues D122 and 133–135 (THT).

As to quaternary structure, homodimer. Binds DNA as a dimer and an octamer. The octamer formed with lysine is stable in solution, but the octamer formed with arginine is unstable without DNA. When crystallized in the absence of DNA, dimers are assembled into helical cylinders with six dimers per turn. In solution, predominantly behaves as a dimer.

Its activity is regulated as follows. In the famine mode, FL11 forms dimers and acts as a repressor, leading to growth arrest. In the feast mode, in the presence of high concentrations of lysine or arginine, four dimers assemble into an octamer and cover the fl11 and lysine biosynthesis promoters. This leads to the inhibition of fl11 expression and lysine biosynthesis, decrease of the FL11 concentration in the cell, derepression of the target genes and activation of the metabolism. In terms of biological role, DNA-binding protein involved in the repression of transcription of a large number of genes, thereby arresting growth, in response to environmental changes. Binding sites are identified in promoters of approximately 200 transcription units, including genes involved in ATP synthesis, transmembrane transport, translation and DNA synthesis. The sequence is that of HTH-type transcriptional regulator FL11 from Pyrococcus horikoshii (strain ATCC 700860 / DSM 12428 / JCM 9974 / NBRC 100139 / OT-3).